We begin with the raw amino-acid sequence, 244 residues long: Phosphoadenosine 5'-phosphosulfate reductase (244 aa).

Cys-239 functions as the Nucleophile; cysteine thiosulfonate intermediate in the catalytic mechanism.

This sequence belongs to the PAPS reductase family. CysH subfamily.

The protein resides in the cytoplasm. It carries out the reaction [thioredoxin]-disulfide + sulfite + adenosine 3',5'-bisphosphate + 2 H(+) = [thioredoxin]-dithiol + 3'-phosphoadenylyl sulfate. Its pathway is sulfur metabolism; hydrogen sulfide biosynthesis; sulfite from sulfate: step 3/3. Its function is as follows. Catalyzes the formation of sulfite from phosphoadenosine 5'-phosphosulfate (PAPS) using thioredoxin as an electron donor. In Salmonella newport (strain SL254), this protein is Phosphoadenosine 5'-phosphosulfate reductase.